The sequence spans 442 residues: MSGLAYLDLPAARLARGEVALPGSKSISNRVLLLAALAEGSTEITGLLDSDDTRVMLAALRQLGVSVGEVADGCVTIEGVARFPTEQAELFLGNAGTAFRPLTAALALMGGDYRLSGVPRMHERPIGDLVDALRQFGAGIEYLGQAGYPPLRIGGGSIRVDGPVRVEGSVSSQFLTALLMAAPVLARRSGQDITIEVVGELISKPYIEITLNLMARFGVSVRRDGWRAFTIARDAAYRGPGRMAIEGDASTASYFLALGAIGGGPVRVTGVGEDSIQGDVAFAATLAAMGADVRYGPGWIETRGVRVAEGGRLKAFDADFNLIPDAAMTAATLALYADGPCRLRNIGSWRVKETDRIHAMHTELEKLGAGVQSGADWLEVAPPAPGGWRDAHIGTWDDHRMAMCFSLAAFGPAAVRILDPGCVSKTFPDYFDVYAGLLAARD.

3-phosphoshikimate contacts are provided by Lys-25, Ser-26, and Arg-30. Residue Lys-25 participates in phosphoenolpyruvate binding. Residues Gly-96 and Arg-124 each contribute to the phosphoenolpyruvate site. 3-phosphoshikimate contacts are provided by Ser-171, Ser-172, Gln-173, Ser-203, Asp-325, and Lys-352. Gln-173 lines the phosphoenolpyruvate pocket. Asp-325 serves as the catalytic Proton acceptor. 3 residues coordinate phosphoenolpyruvate: Arg-356, Arg-400, and Lys-425.

The protein belongs to the EPSP synthase family. Monomer.

Its subcellular location is the cytoplasm. The enzyme catalyses 3-phosphoshikimate + phosphoenolpyruvate = 5-O-(1-carboxyvinyl)-3-phosphoshikimate + phosphate. Its pathway is metabolic intermediate biosynthesis; chorismate biosynthesis; chorismate from D-erythrose 4-phosphate and phosphoenolpyruvate: step 6/7. Catalyzes the transfer of the enolpyruvyl moiety of phosphoenolpyruvate (PEP) to the 5-hydroxyl of shikimate-3-phosphate (S3P) to produce enolpyruvyl shikimate-3-phosphate and inorganic phosphate. The chain is 3-phosphoshikimate 1-carboxyvinyltransferase from Bordetella bronchiseptica (strain ATCC BAA-588 / NCTC 13252 / RB50) (Alcaligenes bronchisepticus).